The chain runs to 496 residues: MASAGSTARRAGSGSWHSERGEGRGARPQPTPHGSMQRANKVSLKATWTDAESKQPRPSEESDQTTIDQTAIRSYYQLFAAAVGNVEWLRFCLNQSLREIPTDYKGFTAIHFAAQRGKLACLQVLVEEYKFPVNLLTNNSQTPLHLVIHKDNTTVALPCIYYLLEKGAALNAQTCNGCTPLHLAVREGLLDCVKVLVQSGANVHAQDAMGYKPIDFCKIWNHRACARFLKDAMWKKDKKDFACEMRKMKTLKSQLALMEYNYLIEYQKEHKILREAAIRKWLHGKLHPGHSLVSNTKQARATALSKTPEQRGSQCSSSFHPSVEARLQCIPQPTEMPKPIYRKSTIKRPTMWNVSNNPARPPTTKISHSQGIRLGVHPDPSPEHDFSSFLEVRPDRHGGAWLHTVDGHWVAPVPRLPFEVLLRMLYPHVRPYRMKVPQGFYPISMREVPRKRHLGDDTFWTDTLAMNLRDTFDEAFLAAVRSHQGLPALPSPQINP.

Over residues 1 to 15 (MASAGSTARRAGSGS) the composition is skewed to low complexity. Positions 1–66 (MASAGSTARR…RPSEESDQTT (66 aa)) are disordered. The segment covering 51–60 (AESKQPRPSE) has biased composition (basic and acidic residues). 3 ANK repeats span residues 105 to 135 (KGFT…PVNL), 139 to 172 (NSQT…ALNA), and 176 to 205 (NGCT…NVHA). The disordered stretch occupies residues 292–320 (LVSNTKQARATALSKTPEQRGSQCSSSFH).

In terms of assembly, interacts with PSRC1; recruited by PSRC1 to the spindle during mitosis. In terms of processing, phosphorylated during mitosis.

The protein localises to the cytoplasm. Its subcellular location is the cytoskeleton. It is found in the spindle. The protein resides in the spindle pole. Its function is as follows. Required for normal progression through mitosis. Involved in chromosome alignment and cytokinesis via regulation of microtubules polymerization. The chain is Ankyrin repeat domain-containing protein 53 (ANKRD53) from Macaca fascicularis (Crab-eating macaque).